Consider the following 335-residue polypeptide: Pyridoxal 5'-phosphate synthase subunit PdxS (335 aa).

Asp-30 contacts D-ribose 5-phosphate. Lys-87 acts as the Schiff-base intermediate with D-ribose 5-phosphate in catalysis. Residue Gly-159 coordinates D-ribose 5-phosphate. A D-glyceraldehyde 3-phosphate-binding site is contributed by Arg-171. D-ribose 5-phosphate contacts are provided by residues Gly-257 and 278-279; that span reads GS.

The protein belongs to the PdxS/SNZ family. As to quaternary structure, in the presence of PdxT, forms a dodecamer of heterodimers.

The catalysed reaction is aldehydo-D-ribose 5-phosphate + D-glyceraldehyde 3-phosphate + L-glutamine = pyridoxal 5'-phosphate + L-glutamate + phosphate + 3 H2O + H(+). Its pathway is cofactor biosynthesis; pyridoxal 5'-phosphate biosynthesis. In terms of biological role, catalyzes the formation of pyridoxal 5'-phosphate from ribose 5-phosphate (RBP), glyceraldehyde 3-phosphate (G3P) and ammonia. The ammonia is provided by the PdxT subunit. Can also use ribulose 5-phosphate and dihydroxyacetone phosphate as substrates, resulting from enzyme-catalyzed isomerization of RBP and G3P, respectively. The protein is Pyridoxal 5'-phosphate synthase subunit PdxS of Thermococcus kodakarensis (strain ATCC BAA-918 / JCM 12380 / KOD1) (Pyrococcus kodakaraensis (strain KOD1)).